Reading from the N-terminus, the 79-residue chain is uncharacterized protein (79 aa).

Belongs to the asfivirus D79L family.

This is an uncharacterized protein from African swine fever virus (strain Badajoz 1971 Vero-adapted) (Ba71V).